We begin with the raw amino-acid sequence, 598 residues long: MTISLARYNFFISLELLKTLVAKGVKYFVLCPGSRSGPLALAAASLSKRKELTLITSIDERSAAFLALGISAASGQVSCVITTSGSAVANLLPAAVEADRSCHPLLFLTADRPLRLKECGANQAVNQQDFLKSVCRHFDESPKEGIHLISKERLTSLVGKSFEMASNIPGPVHINLAYEEPLHPCEIDQNKVLDGWGIEGFLKEKVTPNKVEVFKSFQSLKLPKLDPFSLGIIILGPWRGKVKQLNSFRGALKQWQKLTGWPILADPLSGVENDQEGLINHWDLFFSIGLFEKIKEIQVLRLGPIPPSRELQTWLKKPGKFQLLITEGDCRNLDPIGGSTQFSEGFSCWVDKMLECIPVKPAIDKKIVSQKLTKELIKYDLFINHWLDKRLFRNGLITEPALARLLPRLLPDSIPVMIASSSPIRDWLSYSGEGAFLRRCFGFRGASGIDGTLSMGMGLSIIMGRMVLVTGDLALLHDTNGWLFSKDKNISLIVIMIDNGGGGIFNQLNIDRIKEGDFEEIFLMPQQVCHLTLAKAYGLKYKQVACLDDLEKAIEWSFSLSTNVLIRVCTNSIEDHRLRVNLSDDLKKTLSENLSSFD.

It belongs to the TPP enzyme family. MenD subfamily. As to quaternary structure, homodimer. It depends on Mg(2+) as a cofactor. The cofactor is Mn(2+). Thiamine diphosphate serves as cofactor.

The catalysed reaction is isochorismate + 2-oxoglutarate + H(+) = 5-enolpyruvoyl-6-hydroxy-2-succinyl-cyclohex-3-ene-1-carboxylate + CO2. The protein operates within quinol/quinone metabolism; 1,4-dihydroxy-2-naphthoate biosynthesis; 1,4-dihydroxy-2-naphthoate from chorismate: step 2/7. Its pathway is cofactor biosynthesis; phylloquinone biosynthesis. In terms of biological role, catalyzes the thiamine diphosphate-dependent decarboxylation of 2-oxoglutarate and the subsequent addition of the resulting succinic semialdehyde-thiamine pyrophosphate anion to isochorismate to yield 2-succinyl-5-enolpyruvyl-6-hydroxy-3-cyclohexene-1-carboxylate (SEPHCHC). This Prochlorococcus marinus (strain NATL1A) protein is 2-succinyl-5-enolpyruvyl-6-hydroxy-3-cyclohexene-1-carboxylate synthase.